The primary structure comprises 314 residues: MTSTRYEGDTWDLASSVGVTATMVAAARAMATRADNPLINDPFAEPLVKAVGVDLLSRLAGGELDPAELNDVHDGAAGSAGAMSRMADNMAVRTKFFDEFFLNATKAGIAQVVILASGLDARAYRLAWPAGTVVYEVDQPQVIDFKTTALAQLGAAPTAERRVVAVDLRDDWPAALRAAGFDPTRPTAWSAEGLLGYLPPEAQDRLLDTITELSAPGSRLATESAPNPAPGEEEKLKERMQAISQRWRAHGFDLDMAGLVYFGERNEAAPYLAGHGWRLNSVTIRDLFAANGLDPLDDDDTRMGEMLYTWGIYE.

Residues Asp-138 and 167–168 (DL) contribute to the S-adenosyl-L-methionine site.

This sequence belongs to the UPF0677 family.

Its function is as follows. Exhibits S-adenosyl-L-methionine-dependent methyltransferase activity. This is Putative S-adenosyl-L-methionine-dependent methyltransferase MAV_4441 from Mycobacterium avium (strain 104).